A 155-amino-acid chain; its full sequence is MSRRGTAEEKTAKSDPIYRNRLVNMLVNRILKHGKKSLAYQIIYRTVKKIQQKTETNPLSVLRQAIRGVTPDIAVKARRVGGSTHQVPIEIGSTQGKALAIRWLLGASRKRPGRNMAFKLSSELVDAAKGSGDAIRKKEETHRMAEANRAFAHFR.

The protein belongs to the universal ribosomal protein uS7 family. In terms of assembly, part of the 30S ribosomal subunit.

The protein resides in the plastid. It localises to the chloroplast. Its function is as follows. One of the primary rRNA binding proteins, it binds directly to 16S rRNA where it nucleates assembly of the head domain of the 30S subunit. This is Small ribosomal subunit protein uS7c (rps7) from Dioscorea bulbifera (Air potato).